The following is a 255-amino-acid chain: Cytochrome c oxidase subunit 3 (255 aa).

7 consecutive transmembrane segments (helical) span residues 12–29 (INII…STGL), 57–77 (LKYL…INGI), 91–111 (IFGM…WGFF), 126–146 (LEAF…ISLI), 155–175 (YFEV…FLSF), 196–216 (FNVL…FALM), and 235–255 (GMYW…LFLL).

Belongs to the cytochrome c oxidase subunit 3 family. In terms of assembly, component of the cytochrome c oxidase (complex IV, CIV), a multisubunit enzyme composed of a catalytic core of 3 subunits and several supernumerary subunits. The complex exists as a monomer or a dimer and forms supercomplexes (SCs) in the inner mitochondrial membrane with ubiquinol-cytochrome c oxidoreductase (cytochrome b-c1 complex, complex III, CIII).

It is found in the mitochondrion inner membrane. The enzyme catalyses 4 Fe(II)-[cytochrome c] + O2 + 8 H(+)(in) = 4 Fe(III)-[cytochrome c] + 2 H2O + 4 H(+)(out). Component of the cytochrome c oxidase, the last enzyme in the mitochondrial electron transport chain which drives oxidative phosphorylation. The respiratory chain contains 3 multisubunit complexes succinate dehydrogenase (complex II, CII), ubiquinol-cytochrome c oxidoreductase (cytochrome b-c1 complex, complex III, CIII) and cytochrome c oxidase (complex IV, CIV), that cooperate to transfer electrons derived from NADH and succinate to molecular oxygen, creating an electrochemical gradient over the inner membrane that drives transmembrane transport and the ATP synthase. Cytochrome c oxidase is the component of the respiratory chain that catalyzes the reduction of oxygen to water. Electrons originating from reduced cytochrome c in the intermembrane space (IMS) are transferred via the dinuclear copper A center (CU(A)) of subunit 2 and heme A of subunit 1 to the active site in subunit 1, a binuclear center (BNC) formed by heme A3 and copper B (CU(B)). The BNC reduces molecular oxygen to 2 water molecules using 4 electrons from cytochrome c in the IMS and 4 protons from the mitochondrial matrix. This chain is Cytochrome c oxidase subunit 3 (MT-CO3), found in Theileria annulata.